We begin with the raw amino-acid sequence, 176 residues long: NAD(P)H-quinone oxidoreductase subunit 6, chloroplastic (176 aa).

Helical transmembrane passes span 10 to 30 (FLLV…VLLP), 32 to 52 (PIYS…FYIL), 61 to 81 (AQLL…VMFM), 92 to 112 (LWTV…ISLI), and 152 to 172 (FFLP…GAIA).

It belongs to the complex I subunit 6 family. In terms of assembly, NDH is composed of at least 16 different subunits, 5 of which are encoded in the nucleus.

It is found in the plastid. Its subcellular location is the chloroplast thylakoid membrane. The enzyme catalyses a plastoquinone + NADH + (n+1) H(+)(in) = a plastoquinol + NAD(+) + n H(+)(out). It carries out the reaction a plastoquinone + NADPH + (n+1) H(+)(in) = a plastoquinol + NADP(+) + n H(+)(out). In terms of biological role, NDH shuttles electrons from NAD(P)H:plastoquinone, via FMN and iron-sulfur (Fe-S) centers, to quinones in the photosynthetic chain and possibly in a chloroplast respiratory chain. The immediate electron acceptor for the enzyme in this species is believed to be plastoquinone. Couples the redox reaction to proton translocation, and thus conserves the redox energy in a proton gradient. The sequence is that of NAD(P)H-quinone oxidoreductase subunit 6, chloroplastic (ndhG) from Atropa belladonna (Belladonna).